We begin with the raw amino-acid sequence, 719 residues long: MVSNLLKGLILFSLFISFLNGDDKIFPVTIRDLSPMTNPDFEIKNNNTLVKGIVKSKLNHSDRSPVYCCGDNHAPSNDAYNFVVHNQSTFHSWFHDVPGVNVPVLSKLVFKQNQTDPRVFYYETPSFFPIDDLGFKDPNYKGKKINEPNYMSKDKFAHNYHFCLEMHASFFYIGGEEFNFKGDDDVWVFINDDLVIDLGAPHTAESASVDLDKLGLIKGKSYNFDFFYCERHTTESYIHISTSIDLECKWKDYCGVCEGTGKCCDVSQCTGSLSPCGSWECPPPNIGTKEWKYNCIMKEPNCTLLDTMCTSYECNAISKTCEPRENVDPCAYTNSCEKKVCSEELGGCYEVEKKCYSEAFSDPTCYELPCVNGTCTVNRLCDIPDKCIISTCIEGNGCSHLKKQCSDKDYCTIDSCSSITGECFFDRVKDCQPCNETLCATDESNLCVRTECNPYDNSTCNEIKLVDCDDGNLCTNDICDPATGKCSNLPVVCEIKDACNKPQCDMVTGKCIVTDNCNDNNICSDDSCSLDGTCIHTKKNCDDGNKCTNDFCKVDIGCVHSNITCESSSVCMVASCDSNKGCIESPIVCPSSAFCLVAQCDVGYGGCNQYDKVCIPDDPHCQYGICDNSTKKCTFKDFDPLPFRCQSVAVKAGVIGGAAIAGVVVGGAVALGLALFGAKAGYNHWMSLKNNQMATSSVNPLYEPSPHQGTNPLWEAPPT.

An N-terminal signal peptide occupies residues 1-21 (MVSNLLKGLILFSLFISFLNG). Residues 22-653 (DDKIFPVTIR…RCQSVAVKAG (632 aa)) lie on the Extracellular side of the membrane. Residues asparagine 46, asparagine 59, asparagine 86, asparagine 113, asparagine 301, asparagine 372, asparagine 435, asparagine 457, asparagine 562, and asparagine 628 are each glycosylated (N-linked (GlcNAc...) asparagine). A PA14 domain is found at 112-260 (QNQTDPRVFY…KDYCGVCEGT (149 aa)). Residues 654 to 674 (VIGGAAIAGVVVGGAVALGLA) traverse the membrane as a helical segment. The Cytoplasmic segment spans residues 675 to 719 (LFGAKAGYNHWMSLKNNQMATSSVNPLYEPSPHQGTNPLWEAPPT).

Belongs to the prespore-cell-inducing factor family.

The protein resides in the membrane. The polypeptide is Protein psiJ (psiJ) (Dictyostelium discoideum (Social amoeba)).